The following is a 403-amino-acid chain: F-box/kelch-repeat protein At5g39560 (403 aa).

One can recognise an F-box domain in the interval 26-72; the sequence is PPSLMSLPYEIIENILARISKWSYPNLSLVSKSFLSLLSSPQLYKTR. Kelch repeat units lie at residues 138 to 182, 184 to 229, 248 to 294, and 296 to 340; these read EIYV…LIDQ, IYVL…VWPN, NPNA…IENV, and YACH…VNYG.

The polypeptide is F-box/kelch-repeat protein At5g39560 (Arabidopsis thaliana (Mouse-ear cress)).